Consider the following 370-residue polypeptide: Glutamate 5-kinase (370 aa).

K12 is an ATP binding site. Substrate-binding residues include S52, D139, and N151. Residues 171–172 (SD) and 213–219 (TGGMFTK) each bind ATP. Residues 278-356 (QAHIAVDAGA…SDIESILGYS (79 aa)) form the PUA domain.

The protein belongs to the glutamate 5-kinase family.

The protein localises to the cytoplasm. The catalysed reaction is L-glutamate + ATP = L-glutamyl 5-phosphate + ADP. It participates in amino-acid biosynthesis; L-proline biosynthesis; L-glutamate 5-semialdehyde from L-glutamate: step 1/2. In terms of biological role, catalyzes the transfer of a phosphate group to glutamate to form L-glutamate 5-phosphate. In Herpetosiphon aurantiacus (strain ATCC 23779 / DSM 785 / 114-95), this protein is Glutamate 5-kinase.